The primary structure comprises 144 residues: Maximins 1/H1 (144 aa).

Residues 1–18 (MNFKYIVAVSFLLASAYA) form the signal peptide. Residues 19-43 (RSEENDEQSLSQRDVLEEESLREIR) constitute a propeptide that is removed on maturation. N70 is subject to Asparagine amide. The propeptide occupies 74-123 (TAEEHEVMKRLEAVMRDLDSLDYPEEAAERETRSFNQEEIANLFTKKEKR). L143 is subject to Leucine amide.

Belongs to the bombinin family. Expressed by the skin glands.

It localises to the secreted. Antibacterial peptide with amphipathic alpha-helical structure that has activity against both Gram-positive and Gram-negative bacteria. Also shows antimicrobial activity against the fungus C.albicans, but not against A.flavus nor P.uticale. It has little hemolytic activity. It possess a significant cytotoxicity against tumor cell lines, but does not possess a significant anti-HIV activity. Also shows high spermicidal activity. In terms of biological role, antibacterial peptide with activity against both Gram-positive and Gram-negative bacteria. Also shows antimicrobial activity against the fungus C.albicans. In addition, shows strong hemolytic activity. The polypeptide is Maximins 1/H1 (Bombina maxima (Giant fire-bellied toad)).